Reading from the N-terminus, the 863-residue chain is Bifunctional uridylyltransferase/uridylyl-removing enzyme (863 aa).

A uridylyltransferase region spans residues 1 to 328 (MLFPLSLSSP…SSNQATVIEQ (328 aa)). The uridylyl-removing stretch occupies residues 329–687 (LDDDFQLINQ…ISNRFSLGGT (359 aa)). An HD domain is found at 446–568 (VDEHTLRVML…VQNQVRLDYL (123 aa)). ACT domains lie at 688–772 (EVFI…PNRQ) and 794–863 (EMEL…RNIG).

The protein belongs to the GlnD family. Mg(2+) serves as cofactor.

It carries out the reaction [protein-PII]-L-tyrosine + UTP = [protein-PII]-uridylyl-L-tyrosine + diphosphate. The enzyme catalyses [protein-PII]-uridylyl-L-tyrosine + H2O = [protein-PII]-L-tyrosine + UMP + H(+). Its activity is regulated as follows. Uridylyltransferase (UTase) activity is inhibited by glutamine, while glutamine activates uridylyl-removing (UR) activity. Modifies, by uridylylation and deuridylylation, the PII regulatory proteins (GlnB and homologs), in response to the nitrogen status of the cell that GlnD senses through the glutamine level. Under low glutamine levels, catalyzes the conversion of the PII proteins and UTP to PII-UMP and PPi, while under higher glutamine levels, GlnD hydrolyzes PII-UMP to PII and UMP (deuridylylation). Thus, controls uridylylation state and activity of the PII proteins, and plays an important role in the regulation of nitrogen assimilation and metabolism. The sequence is that of Bifunctional uridylyltransferase/uridylyl-removing enzyme from Haemophilus influenzae (strain PittEE).